Here is a 72-residue protein sequence, read N- to C-terminus: Alpha-mammal toxin Bot3 (72 aa).

The N-terminal stretch at 1-8 (LVMAGVES) is a signal peptide. One can recognise an LCN-type CS-alpha/beta domain in the interval 10 to 72 (KDGYIVDDRN…VRTKGPGRCN (63 aa)). Intrachain disulfides connect C20-C71, C24-C44, C30-C54, and C34-C56. Position 72 is an asparagine amide (N72).

Belongs to the long (4 C-C) scorpion toxin superfamily. Sodium channel inhibitor family. Alpha subfamily. In terms of processing, when the toxin is not amidated, there are 75% loss of toxicity to mice, and total incapacity to bind rat brain synaptosomes. Expressed by the venom gland.

Its subcellular location is the secreted. Its function is as follows. Alpha toxins bind voltage-independently at site-3 of sodium channels (Nav) and inhibit the inactivation of the activated channels, thereby blocking neuronal transmission. Is active against mammals and binds with high affinity to rat brain synaptosomes. This chain is Alpha-mammal toxin Bot3, found in Buthus occitanus tunetanus (Common European scorpion).